A 173-amino-acid polypeptide reads, in one-letter code: Cytidylate kinase (173 aa).

7 to 15 (GLAGTGTST) contacts ATP.

This sequence belongs to the cytidylate kinase family. Type 2 subfamily.

Its subcellular location is the cytoplasm. The enzyme catalyses CMP + ATP = CDP + ADP. It carries out the reaction dCMP + ATP = dCDP + ADP. The protein is Cytidylate kinase of Methanosphaera stadtmanae (strain ATCC 43021 / DSM 3091 / JCM 11832 / MCB-3).